The sequence spans 938 residues: AP-4 complex subunit epsilon (938 aa).

HEAT repeat units follow at residues 118-153, 154-190, 192-227, 234-272, 321-358, 359-395, 397-431, 454-495, 517-556, and 562-601; these read DLII…INEE, TIPA…KSPS, VSHL…EDVN, SSFV…IMAL, KLLE…ISPD, IAEQ…SSNV, VIVD…QFAP, KVAH…EPKL, YSAS…FEIA, and DVLP…RAVE. Disordered stretches follow at residues 690-712, 725-867, 880-912, and 919-938; these read EPSY…RESS, WGRP…VMGL, VDSL…KEAL, and RQMG…DLLG. Positions 694–706 are enriched in polar residues; sequence YSESHQPISTSLV. A compositionally biased stretch (low complexity) spans 728-744; sequence PSYQSTTAASSTTPQAA. A compositionally biased stretch (basic and acidic residues) spans 764 to 779; it reads SSYEPKKPEIDPEKQR. The segment covering 808–821 has biased composition (polar residues); sequence ANKTATVPKENQTP. 2 stretches are compositionally biased toward low complexity: residues 853 to 863 and 880 to 891; these read DSSSQDGGSSD and VDSLLSELSDSS. An HEAT 11 repeat occupies 874–911; the sequence is VTTTTSVDSLLSELSDSSKGNSRTYQPQTSKGPNTKEA. Positions 892–906 are enriched in polar residues; sequence KGNSRTYQPQTSKGP.

Belongs to the adaptor complexes large subunit family. In terms of assembly, adaptor protein complex 4 (AP-4) is a heterotetramer composed of two large adaptins (epsilon-type subunit and beta-type subunit), a medium adaptin (mu-type subunit) and a small adaptin (sigma-type subunit).

It localises to the golgi apparatus. The protein resides in the trans-Golgi network. The protein localises to the membrane. It is found in the coated pit. In terms of biological role, subunit of novel type of clathrin- or non-clathrin-associated protein coat involved in targeting proteins from the trans-Golgi network (TGN) to the endosomal-lysosomal system. This is AP-4 complex subunit epsilon from Arabidopsis thaliana (Mouse-ear cress).